We begin with the raw amino-acid sequence, 294 residues long: StAR-related lipid transfer protein 3 (294 aa).

An MENTAL domain is found at 1 to 66; the sequence is DGYICNNGMD…YSPPESLAGS (66 aa). Residues 55-61 carry the FFAT motif; the sequence is QFYSPPE. The disordered stretch occupies residues 58-77; the sequence is SPPESLAGSEEDLDEEGLGR. The START domain maps to 79–292; that stretch reads AVSPQEKALV…LRQRIRDLRS (214 aa).

It belongs to the STARD3 family. In terms of assembly, homodimer. Phosphorylated. Phosphorylation allows the tethering of two membranes that participates in the formation of ER-endosome contacts. Phosphorylation of FFAT motif drives membrane tethering between the endoplasmic reticulum and late endosomes that in turn allows the efficient transport of sterol mediated by the START domain.

It localises to the late endosome membrane. It catalyses the reaction cholesterol(in) = cholesterol(out). In terms of biological role, sterol-binding protein that mediates cholesterol transport from the endoplasmic reticulum to endosomes. The sterol transport mechanism is triggered by phosphorylation of FFAT motif that leads to membrane tethering between the endoplasmic reticulum and late endosomes. Acts as a lipid transfer protein that redirects sterol to the endosome at the expense of the cell membrane and favors membrane formation inside endosomes. The chain is StAR-related lipid transfer protein 3 from Salvelinus fontinalis (Brook trout).